A 155-amino-acid polypeptide reads, in one-letter code: 6,7-dimethyl-8-ribityllumazine synthase (155 aa).

5-amino-6-(D-ribitylamino)uracil-binding positions include Phe22, 56 to 58 (AFE), and 80 to 82 (AVI). 85-86 (ST) contacts (2S)-2-hydroxy-3-oxobutyl phosphate. His88 (proton donor) is an active-site residue. A 5-amino-6-(D-ribitylamino)uracil-binding site is contributed by Phe113. Arg127 is a (2S)-2-hydroxy-3-oxobutyl phosphate binding site.

The protein belongs to the DMRL synthase family.

The catalysed reaction is (2S)-2-hydroxy-3-oxobutyl phosphate + 5-amino-6-(D-ribitylamino)uracil = 6,7-dimethyl-8-(1-D-ribityl)lumazine + phosphate + 2 H2O + H(+). The protein operates within cofactor biosynthesis; riboflavin biosynthesis; riboflavin from 2-hydroxy-3-oxobutyl phosphate and 5-amino-6-(D-ribitylamino)uracil: step 1/2. In terms of biological role, catalyzes the formation of 6,7-dimethyl-8-ribityllumazine by condensation of 5-amino-6-(D-ribitylamino)uracil with 3,4-dihydroxy-2-butanone 4-phosphate. This is the penultimate step in the biosynthesis of riboflavin. The protein is 6,7-dimethyl-8-ribityllumazine synthase of Caldicellulosiruptor bescii (strain ATCC BAA-1888 / DSM 6725 / KCTC 15123 / Z-1320) (Anaerocellum thermophilum).